Here is a 775-residue protein sequence, read N- to C-terminus: Mitochondrial intermediate peptidase (775 aa).

Residues 1 to 28 (MIARPARDVLSSATKKQFRFRGCLAARH) constitute a mitochondrion transit peptide. His558 contributes to the Zn(2+) binding site. The active site involves Glu559. His562 and His565 together coordinate Zn(2+).

Belongs to the peptidase M3 family. Requires Zn(2+) as cofactor.

It is found in the mitochondrion matrix. It catalyses the reaction Release of an N-terminal octapeptide as second stage of processing of some proteins imported into the mitochondrion.. Cleaves proteins, imported into the mitochondrion, to their mature size. While most mitochondrial precursor proteins are processed to the mature form in one step by mitochondrial processing peptidase (MPP), the sequential cleavage by MIP of an octapeptide after initial processing by MPP is a required step for a subgroup of nuclear-encoded precursor proteins destined for the matrix or the inner membrane. This Schizophyllum commune (Split gill fungus) protein is Mitochondrial intermediate peptidase (OCT1).